We begin with the raw amino-acid sequence, 361 residues long: F-box protein pof7 (361 aa).

The region spanning 105–157 is the F-box domain; it reads NESVVPNILKLPDEVLLVILENCIRDLHDLRYLSSIALTCKHFAKALRADSLY.

In terms of assembly, interacts with skp1.

The protein resides in the cytoplasm. In Schizosaccharomyces pombe (strain 972 / ATCC 24843) (Fission yeast), this protein is F-box protein pof7 (pof7).